Consider the following 204-residue polypeptide: N-(5'-phosphoribosyl)anthranilate isomerase (204 aa).

This sequence belongs to the TrpF family.

It catalyses the reaction N-(5-phospho-beta-D-ribosyl)anthranilate = 1-(2-carboxyphenylamino)-1-deoxy-D-ribulose 5-phosphate. The protein operates within amino-acid biosynthesis; L-tryptophan biosynthesis; L-tryptophan from chorismate: step 3/5. This is N-(5'-phosphoribosyl)anthranilate isomerase from Bacillus cereus (strain G9842).